We begin with the raw amino-acid sequence, 723 residues long: Multiple organellar RNA editing factor 4, mitochondrial (723 aa).

A mitochondrion-targeting transit peptide spans 1-64 (MAMFSHRLRR…RLFSTTQYQY (64 aa)). 3 disordered regions span residues 180 to 303 (ITPG…GQTQ), 318 to 474 (RQEM…EGQP), and 663 to 723 (QNGG…NSRI). Positions 191 to 204 (EGFDSLKKESKPEQ) are enriched in basic and acidic residues. 4 stretches are compositionally biased toward polar residues: residues 219 to 233 (TSGQ…TLPD), 273 to 303 (GQWQ…GQTQ), 327 to 365 (GQAQ…QGAQ), and 373 to 430 (QGAQ…NYSP). Composition is skewed to low complexity over residues 459 to 474 (QGQG…EGQP) and 682 to 695 (QGFS…TFQQ). The span at 714–723 (TETRKPNSRI) shows a compositional bias: basic and acidic residues.

The protein belongs to the MORF family. As to quaternary structure, heterodimers with MORF8/RIP1, MORF1/RIP8 and MORF3/RIP3.

It localises to the mitochondrion. Its function is as follows. Involved in organellar RNA editing. Required for the processing of few RNA editing site in mitochondria. This Arabidopsis thaliana (Mouse-ear cress) protein is Multiple organellar RNA editing factor 4, mitochondrial.